The primary structure comprises 600 residues: Arginine--tRNA ligase (600 aa).

Residues 151–153 (SPN), histidine 162, tyrosine 332, aspartate 336, and glutamine 360 contribute to the L-arginine site. Residues 152–162 (PNIAKEMHIGH) carry the 'HIGH' region motif.

It belongs to the class-I aminoacyl-tRNA synthetase family.

The enzyme catalyses tRNA(Arg) + L-arginine + ATP = L-arginyl-tRNA(Arg) + AMP + diphosphate. This Acanthamoeba polyphaga mimivirus (APMV) protein is Arginine--tRNA ligase (RARS).